Reading from the N-terminus, the 205-residue chain is Outer-membrane lipoprotein carrier protein (205 aa).

The N-terminal stretch at 1-19 (MKKIIICFIFVFSINVSFA) is a signal peptide.

Belongs to the LolA family. As to quaternary structure, monomer.

It is found in the periplasm. Functionally, participates in the translocation of lipoproteins from the inner membrane to the outer membrane. Only forms a complex with a lipoprotein if the residue after the N-terminal Cys is not an aspartate (The Asp acts as a targeting signal to indicate that the lipoprotein should stay in the inner membrane). In Francisella tularensis subsp. holarctica (strain LVS), this protein is Outer-membrane lipoprotein carrier protein.